The sequence spans 462 residues: Probable Xaa-Pro aminopeptidase pepP (462 aa).

Residues D259, D270, E393, and E433 each contribute to the Mn(2+) site.

It belongs to the peptidase M24B family. The cofactor is Mn(2+).

The enzyme catalyses Release of any N-terminal amino acid, including proline, that is linked to proline, even from a dipeptide or tripeptide.. Its function is as follows. Catalyzes the removal of a penultimate prolyl residue from the N-termini of peptides. The sequence is that of Probable Xaa-Pro aminopeptidase pepP (pepP) from Metarhizium robertsii (strain ARSEF 23 / ATCC MYA-3075) (Metarhizium anisopliae (strain ARSEF 23)).